The chain runs to 43 residues: METGILIVIFISCLLVSFTGYAVYTAFGQPSKKLRDPFEEHED.

The helical transmembrane segment at Gly4–Tyr24 threads the bilayer.

This sequence belongs to the PsbN family.

The protein localises to the plastid. The protein resides in the chloroplast thylakoid membrane. May play a role in photosystem I and II biogenesis. The chain is Protein PsbN from Coleochaete orbicularis (Charophycean green alga).